Here is a 1291-residue protein sequence, read N- to C-terminus: Ethylene-insensitive protein 2.2 (1291 aa).

The next 6 membrane-spanning stretches (helical) occupy residues 18 to 38 (ALPALGPGLLIAIGYVDPGKW), 48 to 68 (FGFDLVLPMLIFNFVAILCQY), 96 to 116 (FLGVQAALSVIALDLTMILGI), 128 to 148 (LSTCVFLAAVDAVLFPVFATL), 155 to 175 (SFLSTCIAGFLLLLYFFGVLI), and 195 to 215 (SAFALMSLLGASIMPHNFFLH). N-linked (GlcNAc...) asparagine glycosylation is present at asparagine 227. Transmembrane regions (helical) follow at residues 231–251 (GALCLNHFFAILCIFSGIYLV), 253–273 (YVLMNSAANVFYSTGLVLLTF), 288–308 (VALCVFSLILFFANHITALTW), 335–355 (IIAVVPALYCVWTSGVEGIYQ), 356–376 (LLIFTQVMVALLLPSSVIPLF), 393–413 (FLEFLALISFMGMLGIKIIFV), and 441–461 (VLLITACSSFCLMLWLAATPL). A disordered region spans residues 498-518 (TEEESIGGQEQLSGPGKSAES). N-linked (GlcNAc...) asparagine glycosylation is present at asparagine 550. Residues 614–662 (AEKEDDEGDSWEPEESSKGVPGSTSSLTSDGPGSFRSLSGKSDEGGNGA) form a disordered region. The segment covering 617–627 (EDDEGDSWEPE) has biased composition (acidic residues). Residues 635–653 (GSTSSLTSDGPGSFRSLSG) show a composition bias toward polar residues. Residues serine 647 and serine 664 each carry the phosphoserine modification. Disordered regions lie at residues 742–768 (QIHSSLGDSPNHLRVPSNIDSSYGGQR) and 787–808 (GPSRSIADSSERRYSSVHTLPS). The span at 759–768 (NIDSSYGGQR) shows a compositional bias: polar residues. Phosphothreonine is present on threonine 818. Residues 836–856 (GSSSLNGQMDSPAPISPSLGP) are disordered. Asparagine 891 is a glycosylation site (N-linked (GlcNAc...) asparagine). Phosphoserine is present on serine 923. An N-linked (GlcNAc...) asparagine glycan is attached at asparagine 1027. Residues 1210 to 1229 (HRSSPPVSNGMLPPASKPGR) are disordered. Positions 1262–1269 (DVAFPKGK) match the Nuclear localization signal motif.

The protein belongs to the NRAMP (TC 2.A.55) family.

It localises to the endoplasmic reticulum membrane. Its subcellular location is the nucleus. The protein resides in the cytoplasm. In terms of biological role, central factor in signaling pathways regulated by ethylene (ET) and involved in various processes including development, plant defense, senescence, nucleotide sugar flux, and tropisms. Its function is as follows. Trafficking signal inducing ethylene response. The nuclear localization is both necessary and sufficient to activate EIN3-mediated transcription and ethylene responses. The chain is Ethylene-insensitive protein 2.2 from Populus trichocarpa (Western balsam poplar).